The chain runs to 706 residues: Protein MAM3 (706 aa).

The Vacuolar segment spans residues 1–16 (MSFLPLRSRSRSGAPH). Residues 17-37 (WVYIILYHIFTIPKIYSLPLL) form a helical membrane-spanning segment. The Cytoplasmic portion of the chain corresponds to 38-65 (SGSHVLNSRDVADSGHSVGDEASVTTYY). Positions 57–240 (DEASVTTYYI…MGVERLTKDE (184 aa)) constitute a CNNM transmembrane domain. The chain crosses the membrane as a helical span at residues 66-86 (IISIILVLLGGVFAGLTLGLM). Topologically, residues 87 to 120 (GQDEVYLKVISTSGSNSEKKLAKRVLDLISRGKH) are vacuolar. The chain crosses the membrane as a helical span at residues 121 to 141 (WVLVTLLLSNVITNETLPIVL). The Cytoplasmic portion of the chain corresponds to 142 to 145 (DRCL). The helical transmembrane segment at 146–166 (GGGWQAVVSSTILIVIFGEII) threads the bilayer. Over 167–177 (PQSVCVKYGLQ) the chain is Vacuolar. The chain crosses the membrane as a helical span at residues 178–198 (VGAFFCPFVLVLMYLMYPVAY). Residues 199–706 (PIATLLDYML…ANGSSSTIKR (508 aa)) lie on the Cytoplasmic side of the membrane. CBS domains lie at 259–320 (MTPI…DCLP) and 321–386 (ISHF…IVDE). Disordered regions lie at residues 421 to 495 (SHKE…ASNP), 515 to 540 (ITTH…LSAE), and 557 to 597 (LHTQ…ENQN). A compositionally biased stretch (low complexity) spans 433–445 (ESSPLLSPSNSNH). Residues S439 and S447 each carry the phosphoserine modification. Positions 472–495 (AVLSPTPQVTEHGTIIPSNLASNP) are enriched in polar residues. S527 bears the Phosphoserine mark. Residues 566–575 (TQVTTSTKTT) are compositionally biased toward low complexity. Positions 576 to 597 (RNSPDSISIPNSGANHGNENQN) are enriched in polar residues. Residue S603 is modified to Phosphoserine. A Phosphotyrosine modification is found at Y604. T607 is subject to Phosphothreonine. Phosphoserine is present on S614. Positions 626–706 (IGPAKDWDES…ANGSSSTIKR (81 aa)) are disordered. Positions 630–639 (KDWDESKSEY) are enriched in basic and acidic residues. Positions 658-680 (SSSNASLFSSIKNKFKNENANNN) are enriched in low complexity. Residues 681–706 (DRSNFTDSLSRTSNYDANGSSSTIKR) show a composition bias toward polar residues.

This sequence belongs to the ACDP family.

It localises to the vacuole membrane. Functionally, involved in metal homeostasis and more specially in manganese sensitivity. The protein is Protein MAM3 (MAM3) of Saccharomyces cerevisiae (strain ATCC 204508 / S288c) (Baker's yeast).